Here is a 112-residue protein sequence, read N- to C-terminus: Small ribosomal subunit protein bS6 (112 aa).

Belongs to the bacterial ribosomal protein bS6 family.

Functionally, binds together with bS18 to 16S ribosomal RNA. The chain is Small ribosomal subunit protein bS6 from Legionella pneumophila (strain Paris).